A 274-amino-acid polypeptide reads, in one-letter code: Dehydration-responsive element-binding protein 2A (274 aa).

2 stretches are compositionally biased toward basic and acidic residues: residues 1–10 (MERGEGRRGD) and 35–50 (KWWK…ENSS). Residues 1 to 75 (MERGEGRRGD…KGGPENSNCA (75 aa)) form a disordered region. The segment at residues 75-132 (AYRGVRQRTWGKWVAEIREPNRGRRLWLGSFPTALEAAHAYDEAARAMYGPTARVNFA) is a DNA-binding region (AP2/ERF).

This sequence belongs to the AP2/ERF transcription factor family. ERF subfamily.

It is found in the nucleus. Its function is as follows. Transcriptional activator that binds specifically to the DNA sequence 5'-[AG]CCGAC-3' of the cis-acting dehydration-responsive element (DRE). Binding to the C-repeat/DRE element mediates high salinity- and dehydration-inducible transcription. The polypeptide is Dehydration-responsive element-binding protein 2A (DREB2A) (Oryza sativa subsp. japonica (Rice)).